Consider the following 274-residue polypeptide: Diaminopimelate epimerase (274 aa).

Residues asparagine 11, glutamine 44, and asparagine 64 each contribute to the substrate site. Residue cysteine 73 is the Proton donor of the active site. Substrate-binding positions include 74-75, asparagine 157, asparagine 190, and 208-209; these read GN and ER. The active-site Proton acceptor is the cysteine 217. 218–219 is a binding site for substrate; the sequence is GT.

This sequence belongs to the diaminopimelate epimerase family. Homodimer.

It localises to the cytoplasm. The enzyme catalyses (2S,6S)-2,6-diaminopimelate = meso-2,6-diaminopimelate. It functions in the pathway amino-acid biosynthesis; L-lysine biosynthesis via DAP pathway; DL-2,6-diaminopimelate from LL-2,6-diaminopimelate: step 1/1. Functionally, catalyzes the stereoinversion of LL-2,6-diaminopimelate (L,L-DAP) to meso-diaminopimelate (meso-DAP), a precursor of L-lysine and an essential component of the bacterial peptidoglycan. In Blochmanniella pennsylvanica (strain BPEN), this protein is Diaminopimelate epimerase.